Consider the following 352-residue polypeptide: Histidine biosynthesis bifunctional protein HisB (352 aa).

A histidinol-phosphatase region spans residues 1–164 (MSQKILFIDR…EIENEILSSF (164 aa)). Aspartate 9 (nucleophile) is an active-site residue. Mg(2+) is bound by residues aspartate 9 and aspartate 11. The Proton donor role is filled by aspartate 11. Residues cysteine 93, histidine 95, cysteine 101, and cysteine 103 each contribute to the Zn(2+) site. A Mg(2+)-binding site is contributed by aspartate 130. An imidazoleglycerol-phosphate dehydratase region spans residues 165-352 (RSASYQRTTK…ENLASSKGVI (188 aa)).

This sequence in the N-terminal section; belongs to the histidinol-phosphatase family. It in the C-terminal section; belongs to the imidazoleglycerol-phosphate dehydratase family. The cofactor is Mg(2+). Zn(2+) is required as a cofactor.

It is found in the cytoplasm. It catalyses the reaction D-erythro-1-(imidazol-4-yl)glycerol 3-phosphate = 3-(imidazol-4-yl)-2-oxopropyl phosphate + H2O. The enzyme catalyses L-histidinol phosphate + H2O = L-histidinol + phosphate. The protein operates within amino-acid biosynthesis; L-histidine biosynthesis; L-histidine from 5-phospho-alpha-D-ribose 1-diphosphate: step 6/9. It functions in the pathway amino-acid biosynthesis; L-histidine biosynthesis; L-histidine from 5-phospho-alpha-D-ribose 1-diphosphate: step 8/9. The chain is Histidine biosynthesis bifunctional protein HisB from Campylobacter jejuni subsp. jejuni serotype O:23/36 (strain 81-176).